Here is a 28-residue protein sequence, read N- to C-terminus: Potassium channel toxin alpha-KTx 13.2 (28 aa).

Disulfide bonds link Cys2–Cys19, Cys6–Cys24, and Cys10–Cys26. The segment at 17–24 (IKCINGSC) is interaction with Ca(2+)-activated K(+) channels.

It belongs to the short scorpion toxin superfamily. Potassium channel inhibitor family. Alpha-KTx 13 subfamily. As to expression, expressed by the venom gland.

It is found in the secreted. Its function is as follows. Potent and selective inhibitor of Kv1.2/KCNA2 potassium channels. The polypeptide is Potassium channel toxin alpha-KTx 13.2 (Orthochirus scrobiculosus (Central Asian scorpion)).